The following is a 214-amino-acid chain: A-type ATP synthase subunit D (214 aa).

The protein belongs to the V-ATPase D subunit family. As to quaternary structure, has multiple subunits with at least A(3), B(3), C, D, E, F, H, I and proteolipid K(x).

The protein localises to the cell membrane. Component of the A-type ATP synthase that produces ATP from ADP in the presence of a proton gradient across the membrane. The sequence is that of A-type ATP synthase subunit D from Pyrococcus furiosus (strain ATCC 43587 / DSM 3638 / JCM 8422 / Vc1).